The sequence spans 757 residues: RNA-directed RNA polymerase catalytic subunit (757 aa).

Positions 50–82 (SEKGKWTTNTETGAPQLNPIDGPLPEDNEPSGY) are disordered. The segment covering 55-64 (WTTNTETGAP) has biased composition (polar residues). Short sequence motifs (nuclear localization signal) lie at residues 187–195 (RKRRVRDNM) and 203–216 (RTIG…NKRS). The interval 249–256 (RGFVYFVE) is promoter-binding site. In terms of domain architecture, RdRp catalytic spans 286-483 (VRKMMTNSQD…GINMSKKKSY (198 aa)).

It belongs to the influenza viruses polymerase PB1 family. In terms of assembly, influenza RNA polymerase is composed of three subunits: PB1, PB2 and PA. Interacts (via N-terminus) with PA (via C-terminus). Interacts (via C-terminus) with PB2 (via N-terminus); this interaction is essential for transcription initiation. Interacts (via C-terminus) with human PKP2 (via N-terminus); the interaction competitively inhibits the interaction between the RNA polymerase subunits PB1 and PB2. Post-translationally, phosphorylated by host PRKCA.

Its subcellular location is the host nucleus. The protein resides in the host cytoplasm. It carries out the reaction RNA(n) + a ribonucleoside 5'-triphosphate = RNA(n+1) + diphosphate. In terms of biological role, RNA-dependent RNA polymerase which is responsible for replication and transcription of virus RNA segments. The transcription of viral mRNAs occurs by a unique mechanism called cap-snatching. 5' methylated caps of cellular mRNAs are cleaved after 10-13 nucleotides by PA. In turn, these short capped RNAs are used as primers by PB1 for transcription of viral mRNAs. During virus replication, PB1 initiates RNA synthesis and copy vRNA into complementary RNA (cRNA) which in turn serves as a template for the production of more vRNAs. This is RNA-directed RNA polymerase catalytic subunit from Influenza A virus (strain A/Kiev/59/1979 H1N1).